Consider the following 227-residue polypeptide: NAD(P)H-quinone oxidoreductase subunit K, chloroplastic (227 aa).

Residues C43, C44, C108, and C139 each coordinate [4Fe-4S] cluster.

This sequence belongs to the complex I 20 kDa subunit family. As to quaternary structure, NDH is composed of at least 16 different subunits, 5 of which are encoded in the nucleus. [4Fe-4S] cluster is required as a cofactor.

The protein resides in the plastid. It is found in the chloroplast thylakoid membrane. The enzyme catalyses a plastoquinone + NADH + (n+1) H(+)(in) = a plastoquinol + NAD(+) + n H(+)(out). It catalyses the reaction a plastoquinone + NADPH + (n+1) H(+)(in) = a plastoquinol + NADP(+) + n H(+)(out). In terms of biological role, NDH shuttles electrons from NAD(P)H:plastoquinone, via FMN and iron-sulfur (Fe-S) centers, to quinones in the photosynthetic chain and possibly in a chloroplast respiratory chain. The immediate electron acceptor for the enzyme in this species is believed to be plastoquinone. Couples the redox reaction to proton translocation, and thus conserves the redox energy in a proton gradient. The protein is NAD(P)H-quinone oxidoreductase subunit K, chloroplastic of Drimys granadensis.